A 401-amino-acid chain; its full sequence is Probable inactive purple acid phosphatase 14 (401 aa).

Residues methionine 1–alanine 30 form the signal peptide. Asparagine 79 is a glycosylation site (N-linked (GlcNAc...) asparagine). Asparagine 197 lines the substrate pocket. Asparagine 197 is a Zn(2+) binding site. Asparagine 246 carries N-linked (GlcNAc...) asparagine glycosylation. Histidine 256 contributes to the Zn(2+) binding site. Asparagine 266 carries N-linked (GlcNAc...) asparagine glycosylation. Histidine 305 serves as a coordination point for Zn(2+). Histidine 305–histidine 307 is a binding site for substrate. Histidine 307 serves as a coordination point for Fe cation. Residues asparagine 371 and asparagine 384 are each glycosylated (N-linked (GlcNAc...) asparagine).

The protein belongs to the metallophosphoesterase superfamily. Purple acid phosphatase family. Homodimer. Fe cation serves as cofactor. The cofactor is Zn(2+). Specifically expressed in flowers.

It is found in the secreted. This is Probable inactive purple acid phosphatase 14 (PAP14) from Arabidopsis thaliana (Mouse-ear cress).